The chain runs to 565 residues: Periplasmic trehalase (565 aa).

An N-terminal signal peptide occupies residues 1–30 (MKSPTPSRPQKMALIPACIFLCFAALSVQA). Residues R152, 159 to 160 (WD), N196, 205 to 207 (RSQ), 277 to 279 (RPE), and G310 each bind substrate. Residues D312 and E496 each act as proton donor/acceptor in the active site. A substrate-binding site is contributed by E511. The disordered stretch occupies residues 539 to 565 (CDNVPATRPLSESTTQPLKQKEAEPTP).

This sequence belongs to the glycosyl hydrolase 37 family. Monomer.

It is found in the periplasm. It carries out the reaction alpha,alpha-trehalose + H2O = alpha-D-glucose + beta-D-glucose. Its function is as follows. Provides the cells with the ability to utilize trehalose at high osmolarity by splitting it into glucose molecules that can subsequently be taken up by the phosphotransferase-mediated uptake system. This Escherichia coli (strain SMS-3-5 / SECEC) protein is Periplasmic trehalase.